A 309-amino-acid chain; its full sequence is tRNA dimethylallyltransferase (309 aa).

13 to 20 (GPTAVGKS) is a binding site for ATP. Substrate is bound at residue 15–20 (TAVGKS).

Belongs to the IPP transferase family. Monomer. The cofactor is Mg(2+).

The catalysed reaction is adenosine(37) in tRNA + dimethylallyl diphosphate = N(6)-dimethylallyladenosine(37) in tRNA + diphosphate. Catalyzes the transfer of a dimethylallyl group onto the adenine at position 37 in tRNAs that read codons beginning with uridine, leading to the formation of N6-(dimethylallyl)adenosine (i(6)A). This chain is tRNA dimethylallyltransferase, found in Lacticaseibacillus paracasei (strain ATCC 334 / BCRC 17002 / CCUG 31169 / CIP 107868 / KCTC 3260 / NRRL B-441) (Lactobacillus paracasei).